We begin with the raw amino-acid sequence, 156 residues long: MASTSGVGSVGPASCCETQKPHTIRELCLAQQITYPCIQLCCHYCYKILSVLDIYAFDQSCLYLSWGEGGPTGICSQCTRVLARLEFTARHEVSCAASRLPHFIGQSLSDLEVRCVRCLALLQSVEKDYILREDLSVHRIGGIWRGTCVRCMVGLY.

Zinc fingers lie at residues 42–78 and 115–151; these read CHYCYKILSVLDIYAFDQSCLYLSWGEGGPTGICSQC and CVRCLALLQSVEKDYILREDLSVHRIGGIWRGTCVRC.

Belongs to the papillomaviridae E6 protein family. In terms of assembly, forms homodimers. Interacts with ubiquitin-protein ligase UBE3A/E6-AP; this interaction stimulates UBE3A ubiquitin activity. Interacts with host BAK1.

It is found in the host cytoplasm. The protein resides in the host nucleus. Plays a major role in the induction and maintenance of cellular transformation. E6 associates with host UBE3A/E6-AP ubiquitin-protein ligase and modulates its activity. Protects host keratinocytes from apoptosis by mediating the degradation of host BAK1. May also inhibit host immune response. The sequence is that of Protein E6 from Homo sapiens (Human).